Reading from the N-terminus, the 176-residue chain is MTVDLHDFVATVEDYPEPGVSFRDISPLMGDGVAYKQAVDAIADFAKHLNVDLIAGPESRGFIVGSPLAYAMNIGFVPARKGGKLPREAVSASYTLEYGGVNELEIHKDAIKPGQRVLIVDDLLATGGTINATREIIEKLGGIVAGVAFIIELESLQGREKIMKAGEVPFLALMEY.

Belongs to the purine/pyrimidine phosphoribosyltransferase family. As to quaternary structure, homodimer.

The protein resides in the cytoplasm. The enzyme catalyses AMP + diphosphate = 5-phospho-alpha-D-ribose 1-diphosphate + adenine. The protein operates within purine metabolism; AMP biosynthesis via salvage pathway; AMP from adenine: step 1/1. Its function is as follows. Catalyzes a salvage reaction resulting in the formation of AMP, that is energically less costly than de novo synthesis. This chain is Adenine phosphoribosyltransferase, found in Leuconostoc mesenteroides subsp. mesenteroides (strain ATCC 8293 / DSM 20343 / BCRC 11652 / CCM 1803 / JCM 6124 / NCDO 523 / NBRC 100496 / NCIMB 8023 / NCTC 12954 / NRRL B-1118 / 37Y).